We begin with the raw amino-acid sequence, 499 residues long: Glycerol kinase (499 aa).

Thr17 contributes to the ADP binding site. Residues Thr17, Thr18, and Ser19 each coordinate ATP. Thr17 contributes to the sn-glycerol 3-phosphate binding site. Arg21 contributes to the ADP binding site. The sn-glycerol 3-phosphate site is built by Arg87, Glu88, Tyr139, and Asp243. Glycerol-binding residues include Arg87, Glu88, Tyr139, Asp243, and Gln244. Positions 265 and 308 each coordinate ADP. Positions 265, 308, 312, and 409 each coordinate ATP. Gly409 and Asn413 together coordinate ADP.

Belongs to the FGGY kinase family.

It carries out the reaction glycerol + ATP = sn-glycerol 3-phosphate + ADP + H(+). It functions in the pathway polyol metabolism; glycerol degradation via glycerol kinase pathway; sn-glycerol 3-phosphate from glycerol: step 1/1. With respect to regulation, inhibited by fructose 1,6-bisphosphate (FBP). Functionally, key enzyme in the regulation of glycerol uptake and metabolism. Catalyzes the phosphorylation of glycerol to yield sn-glycerol 3-phosphate. The sequence is that of Glycerol kinase from Pseudomonas putida (strain GB-1).